We begin with the raw amino-acid sequence, 256 residues long: Autophagy protein 5 (256 aa).

Lys113 is covalently cross-linked (Glycyl lysine isopeptide (Lys-Gly) (interchain with G-Cter in ATG12)).

Belongs to the ATG5 family. Conjugated with ATG12. Post-translationally, conjugated to ATG12; which is essential for autophagy.

The protein resides in the preautophagosomal structure membrane. Its function is as follows. Involved in cytoplasm to vacuole transport (Cvt) and autophagic vesicle formation. Autophagy is essential for maintenance of amino acid levels and protein synthesis under nitrogen starvation. Required for selective autophagic degradation of the nucleus (nucleophagy). Also required for mitophagy, which eliminates defective or superfluous mitochondria in order to fulfill cellular energy requirements and prevent excess ROS production. Conjugation with ATG12, through a ubiquitin-like conjugating system involving ATG7 as an E1-like activating enzyme and ATG10 as an E2-like conjugating enzyme, is essential for its function. The ATG12-ATG5 conjugate acts as an E3-like enzyme which is required for lipidation of ATG8 and ATG8 association to the vesicle membranes. The polypeptide is Autophagy protein 5 (ATG5) (Yarrowia lipolytica (strain CLIB 122 / E 150) (Yeast)).